A 208-amino-acid chain; its full sequence is Inducible T-cell costimulator (208 aa).

An N-terminal signal peptide occupies residues 1 to 19; the sequence is MKSDLWYFLLFCFQVEALT. Residues 20-140 are Extracellular-facing; the sequence is GEINDSTKSE…YESQTCCQLK (121 aa). N-linked (GlcNAc...) asparagine glycosylation is present at asparagine 23. The Ig-like V-type domain occupies 30–132; it reads MFTFHDGGVQ…ISREYLNVYE (103 aa). Disulfide bonds link cysteine 42-cysteine 108 and cysteine 63-cysteine 82. N-linked (GlcNAc...) asparagine glycosylation occurs at asparagine 122. The chain crosses the membrane as a helical span at residues 141-161; sequence FWLPIGCAAFVVVYIFGCIFL. The Cytoplasmic portion of the chain corresponds to 162–208; that stretch reads CWLTKKKYRSSVHDPNSEYMFMAAVNTAKKPGLTGVTHNLELCGTQA.

Homodimer; disulfide-linked. Interacts with ICOSLG. Interacts with PIK3R1. Interacts with TBK1; this interaction is critical for the maturation of T follicular regulatory cells. N-glycosylated.

The protein resides in the cell membrane. Its function is as follows. Stimulatory receptor expressed in activated or antigen-experienced T-cells that plays an important role in the immune response. Upon binding to its ligand ICOSL expressed on antigen presenting cells (APCs), delivers costimulatory signals that enhances all basic T-cell responses to a foreign antigen, namely proliferation, secretion of lymphokines including IL10, up-regulation of molecules that mediate cell-cell interaction, and effective help for antibody secretion by B-cells. Also acts as a costimulatory receptor critical for the differentiation of T follicular regulatory cells upon immune challenges such as viral infection. Mechanistically, potentiates TCR-induced calcium flux by augmenting PLCG1 activation and actin remodeling. In addition, activates PI3K signaling pathways independently of calcium flux. Essential both for efficient interaction between T and B-cells and for normal antibody responses to T-cell dependent antigens. Prevents the apoptosis of pre-activated T-cells. Plays a critical role in CD40-mediated class switching of immunoglobin isotypes. This is Inducible T-cell costimulator (ICOS) from Canis lupus familiaris (Dog).